Reading from the N-terminus, the 323-residue chain is MEDGPVFYGFKNIFITMFATFFFFKLLIKVFLALLTHFYIVKGNRKEAARIAEEIYGGISDCWADRSPLHEAAAQGRLLALKTLIAQGVNVNLVTINRVSSLHEACLGGHVACAKALLENGAHVNGVTVHGATPLFNACCSGSAACVNVLLEFGAKAQFEVHLASPIHEAVKRGHRECMEILLANNVNIDHEVPQLGTPLYVACTYQRVDCVKKLLELGASVDHGQWLDTPLHAAARQSNVEVIHLLTDYGANLKRRNAQGKSALDLAAPKSSVEQALLLCEGPPALSQLCRLCVRKCLGRACHQAIHKLHLPEPLERFLLYQ.

ANK repeat units follow at residues 64–93, 97–126, 130–159, 162–191, 195–224, and 227–256; these read ADRSPLHEAAAQGRLLALKTLIAQGVNVNL, NRVSSLHEACLGGHVACAKALLENGAHVNG, HGATPLFNACCSGSAACVNVLLEFGAKAQF, HLASPIHEAVKRGHRECMEILLANNVNIDH, QLGTPLYVACTYQRVDCVKKLLELGASVDH, and WLDTPLHAAARQSNVEVIHLLTDYGANLKR. The SOCS box domain occupies 274–323; the sequence is VEQALLLCEGPPALSQLCRLCVRKCLGRACHQAIHKLHLPEPLERFLLYQ.

This sequence belongs to the ankyrin SOCS box (ASB) family. Substrate-recognition component of the ECS(ASB11) complex, composed of ASB11, CUL5, ELOB, ELOC and RNF7/RBX2.

Its subcellular location is the endoplasmic reticulum. Its pathway is protein modification; protein ubiquitination. In terms of biological role, substrate-recognition component of a cullin-5-RING E3 ubiquitin-protein ligase complex (ECS complex, also named CRL5 complex), which mediates the ubiquitination and subsequent proteasomal degradation of target proteins, such as BIK, DIRAS2 and RPN1. The ECS(ASB11) complex acts as a regulator of the endoplasmic reticulum unfolded protein response by mediating ubiquitination and degradation of BIK. This Pongo abelii (Sumatran orangutan) protein is Ankyrin repeat and SOCS box protein 11 (ASB11).